We begin with the raw amino-acid sequence, 88 residues long: MQQKSSSQKLINVGFGNFVVASRVVAIVNPSSSPMRRLREDARQEGRLVDATQGRKTRSIIITDSNHVILSAIQAETVGQRYTQEDAD.

Belongs to the RemA family.

This is Putative regulatory protein DvMF_1139 from Nitratidesulfovibrio vulgaris (strain DSM 19637 / Miyazaki F) (Desulfovibrio vulgaris).